The following is a 546-amino-acid chain: SusD-like protein BACOVA_02651 (546 aa).

Positions 1–21 (MRIFMKSKLLVIATTALLFAA) are cleaved as a signal peptide. Cysteine 22 is lipidated: N-palmitoyl cysteine. The S-diacylglycerol cysteine moiety is linked to residue cysteine 22.

Belongs to the SusD family.

The protein localises to the cell outer membrane. It participates in glucan metabolism; xyloglucan degradation. Polysaccharide-binding protein present at the surface of the cell. Probably mediates xyloglucan-binding before xyloglucan transport in the periplasm for degradation. The protein is SusD-like protein BACOVA_02651 of Bacteroides ovatus (strain ATCC 8483 / DSM 1896 / JCM 5824 / BCRC 10623 / CCUG 4943 / NCTC 11153).